Reading from the N-terminus, the 485-residue chain is Glutamyl-tRNA(Gln) amidotransferase subunit A (485 aa).

Residues Lys-78 and Ser-153 each act as charge relay system in the active site. Ser-177 serves as the catalytic Acyl-ester intermediate.

The protein belongs to the amidase family. GatA subfamily. In terms of assembly, heterotrimer of A, B and C subunits.

It carries out the reaction L-glutamyl-tRNA(Gln) + L-glutamine + ATP + H2O = L-glutaminyl-tRNA(Gln) + L-glutamate + ADP + phosphate + H(+). In terms of biological role, allows the formation of correctly charged Gln-tRNA(Gln) through the transamidation of misacylated Glu-tRNA(Gln) in organisms which lack glutaminyl-tRNA synthetase. The reaction takes place in the presence of glutamine and ATP through an activated gamma-phospho-Glu-tRNA(Gln). The protein is Glutamyl-tRNA(Gln) amidotransferase subunit A of Pelobacter propionicus (strain DSM 2379 / NBRC 103807 / OttBd1).